The sequence spans 72 residues: Large ribosomal subunit protein uL29 (72 aa).

It belongs to the universal ribosomal protein uL29 family.

This is Large ribosomal subunit protein uL29 from Chlamydia trachomatis serovar L2 (strain ATCC VR-902B / DSM 19102 / 434/Bu).